A 573-amino-acid chain; its full sequence is MLO-like protein 11 (573 aa).

Residues 1–19 lie on the Extracellular side of the membrane; that stretch reads MGEGEENGNEADSNERSLA. The chain crosses the membrane as a helical span at residues 20–40; the sequence is LSPTWSVAIVLTVFVVVSLIV. Residues 41–69 lie on the Cytoplasmic side of the membrane; it reads ERSIYRLSTWLRKTKRKPMFAALEKMKEE. Residues 70-90 form a helical membrane-spanning segment; that stretch reads LMLLGFISLLLTATSSTIANI. The Extracellular portion of the chain corresponds to 91-163; it reads CVPSSFYNDR…SYEGLEQLHR (73 aa). A helical membrane pass occupies residues 164-184; sequence FIFIMAVTHVTYSCLTMLLAI. The Cytoplasmic portion of the chain corresponds to 185 to 287; sequence VKIHSWRIWE…IRSMEEEFQR (103 aa). The next 2 membrane-spanning stretches (helical) occupy residues 288–308 and 309–329; these read IVGVSGPLWGFVVAFMLFNIK and GSNLYFWIAIIPVTLVLLVGA. The Cytoplasmic portion of the chain corresponds to 330-371; it reads KLQHVIATLALENAGLTEYPSGVKLRPRDELFWFNKPELLLS. Residues 372 to 392 form a helical membrane-spanning segment; that stretch reads LIHFILFQNSFELASFFWFWW. The Extracellular portion of the chain corresponds to 393 to 411; it reads QFGYSSCFLKNHYLVYFRL. The chain crosses the membrane as a helical span at residues 412-432; it reads LLGFAGQFLCSYSTLPLYALV. Residues 433–573 are Cytoplasmic-facing; it reads TQMGTNYKAA…SSSLPSEKRV (141 aa). Positions 446–467 are calmodulin-binding; that stretch reads QRIRETIRGWGKATRRKRRHGL. Disordered stretches follow at residues 500-532 and 554-573; these read EQQRKQQEQGTTELELQPIQPRNDCVPNDTSSR and RSEPMETLSRSSSLPSEKRV. Low complexity predominate over residues 507–516; sequence EQGTTELELQ. Over residues 561-573 the composition is skewed to polar residues; sequence LSRSSSLPSEKRV.

It belongs to the MLO family.

It is found in the membrane. Its function is as follows. May be involved in modulation of pathogen defense and leaf cell death. Activity seems to be regulated by Ca(2+)-dependent calmodulin binding and seems not to require heterotrimeric G proteins. This chain is MLO-like protein 11 (MLO11), found in Arabidopsis thaliana (Mouse-ear cress).